Reading from the N-terminus, the 213-residue chain is Imidazole glycerol phosphate synthase subunit HisH (213 aa).

The region spanning 1–212 (MLAILDYKAG…HRYCTEAADA (212 aa)) is the Glutamine amidotransferase type-1 domain. Residue Cys-79 is the Nucleophile of the active site. Active-site residues include His-187 and Glu-189.

In terms of assembly, heterodimer of HisH and HisF.

The protein resides in the cytoplasm. It carries out the reaction 5-[(5-phospho-1-deoxy-D-ribulos-1-ylimino)methylamino]-1-(5-phospho-beta-D-ribosyl)imidazole-4-carboxamide + L-glutamine = D-erythro-1-(imidazol-4-yl)glycerol 3-phosphate + 5-amino-1-(5-phospho-beta-D-ribosyl)imidazole-4-carboxamide + L-glutamate + H(+). The catalysed reaction is L-glutamine + H2O = L-glutamate + NH4(+). It participates in amino-acid biosynthesis; L-histidine biosynthesis; L-histidine from 5-phospho-alpha-D-ribose 1-diphosphate: step 5/9. Its function is as follows. IGPS catalyzes the conversion of PRFAR and glutamine to IGP, AICAR and glutamate. The HisH subunit catalyzes the hydrolysis of glutamine to glutamate and ammonia as part of the synthesis of IGP and AICAR. The resulting ammonia molecule is channeled to the active site of HisF. The polypeptide is Imidazole glycerol phosphate synthase subunit HisH (Nitratidesulfovibrio vulgaris (strain ATCC 29579 / DSM 644 / CCUG 34227 / NCIMB 8303 / VKM B-1760 / Hildenborough) (Desulfovibrio vulgaris)).